The sequence spans 190 residues: DNA dC-&gt;dU-editing enzyme APOBEC-3C (190 aa).

Residues 29–138 enclose the CMP/dCMP-type deaminase domain; sequence DRNETWLCFT…TDYQEGLRSL (110 aa). Residues His66, Cys97, and Cys100 each contribute to the Zn(2+) site.

Belongs to the cytidine and deoxycytidylate deaminase family. Homodimer. Interacts with TRIB3. Zn(2+) serves as cofactor.

It is found in the nucleus. The protein localises to the cytoplasm. It carries out the reaction a 2'-deoxycytidine in single-stranded DNA + H2O + H(+) = a 2'-deoxyuridine in single-stranded DNA + NH4(+). DNA deaminase (cytidine deaminase) which acts as an inhibitor of retrovirus replication and retrotransposon mobility via deaminase-dependent and -independent mechanisms. May also play a role in the epigenetic regulation of gene expression through the process of active DNA demethylation. In Gorilla gorilla gorilla (Western lowland gorilla), this protein is DNA dC-&gt;dU-editing enzyme APOBEC-3C (APOBEC3C).